The sequence spans 96 residues: Co-chaperonin GroES (96 aa).

The protein belongs to the GroES chaperonin family. As to quaternary structure, heptamer of 7 subunits arranged in a ring. Interacts with the chaperonin GroEL.

Its subcellular location is the cytoplasm. Its function is as follows. Together with the chaperonin GroEL, plays an essential role in assisting protein folding. The GroEL-GroES system forms a nano-cage that allows encapsulation of the non-native substrate proteins and provides a physical environment optimized to promote and accelerate protein folding. GroES binds to the apical surface of the GroEL ring, thereby capping the opening of the GroEL channel. This Actinobacillus succinogenes (strain ATCC 55618 / DSM 22257 / CCUG 43843 / 130Z) protein is Co-chaperonin GroES.